We begin with the raw amino-acid sequence, 150 residues long: Large ribosomal subunit protein uL13 (150 aa).

The protein belongs to the universal ribosomal protein uL13 family. Part of the 50S ribosomal subunit.

This protein is one of the early assembly proteins of the 50S ribosomal subunit, although it is not seen to bind rRNA by itself. It is important during the early stages of 50S assembly. The chain is Large ribosomal subunit protein uL13 from Chlamydia abortus (strain DSM 27085 / S26/3) (Chlamydophila abortus).